The chain runs to 351 residues: Prostaglandin reductase 2 (351 aa).

Residue 99–100 (FY) participates in substrate binding. Residues 165 to 168 (GACG), Lys-192, Tyr-208, Asn-231, 253 to 259 (CGQISQY), 287 to 289 (FLV), and Asn-337 each bind NADP(+). 288-290 (LVL) serves as a coordination point for substrate.

This sequence belongs to the NADP-dependent oxidoreductase L4BD family. As to quaternary structure, monomer. As to expression, widely expressed.

The protein localises to the cytoplasm. The catalysed reaction is 13,14-dihydro-15-oxo-prostaglandin E2 + NAD(+) = 15-oxoprostaglandin E2 + NADH + H(+). It carries out the reaction 13,14-dihydro-15-oxo-prostaglandin E2 + NADP(+) = 15-oxoprostaglandin E2 + NADPH + H(+). It catalyses the reaction 13,14-dihydro-15-oxo-PGF2alpha + NADP(+) = 15-oxoprostaglandin F2alpha + NADPH + H(+). The enzyme catalyses 13,14-dihydro-15-oxo-prostaglandin E1 + NADP(+) = 15-oxoprostaglandin E1 + NADPH + H(+). The catalysed reaction is 13,14-dihydro-15-oxo-prostaglandin F1alpha + NADP(+) = 15-oxoprostaglandin F1alpha + NADPH + H(+). Functions as 15-oxo-prostaglandin 13-reductase and acts on 15-keto-PGE1, 15-keto-PGE2, 15-keto-PGE1-alpha and 15-keto-PGE2-alpha with highest activity towards 15-keto-PGE2. Overexpression represses transcriptional activity of PPARG and inhibits adipocyte differentiation. In Homo sapiens (Human), this protein is Prostaglandin reductase 2.